The sequence spans 158 residues: Ankyrin repeat domain-containing protein 37 (158 aa).

3 ANK repeats span residues 1-25 (MLLLDCNPEVDGLKHLLETGASVNA), 30-59 (CKQSPVHLAAGSGLACFLLWQLQTGADLNQ), and 63-92 (LGEAPLHKAAKVGSLECLSLLVASDAQIDL). A Nuclear localization signal motif is present at residues 129–149 (EHPDRNDCVAVLRQKRSLGSV).

In terms of processing, ubiquitinated by the CRL2(FEM1B) complex, leading to its degradation. In terms of tissue distribution, mainly expressed in testis, small intestine, colon, blood leukocytes and in pancreatic adenocarcinoma cells.

It is found in the nucleus. The protein localises to the cytoplasm. The chain is Ankyrin repeat domain-containing protein 37 from Homo sapiens (Human).